We begin with the raw amino-acid sequence, 461 residues long: Transcription factor phm6 (461 aa).

Residues 18–50 constitute a DNA-binding region (zn(2)-C6 fungal-type); it reads CNRCRNHKLKCVVTEAPNGTACCQRCIRAMVPC. Disordered regions lie at residues 55-79 and 256-278; these read RERKKRGSSPRVVPQSPWMHSPWET and LQTDDSSSTQSESSRSRASVGAT. The segment covering 256 to 274 has biased composition (low complexity); the sequence is LQTDDSSSTQSESSRSRAS.

It localises to the nucleus. Functionally, transcription factor that regulates the expression of the gene cluster that mediates the biosynthesis of the trans-fused decalin-containing tetramic acid phomasetin. This Pyrenochaetopsis sp protein is Transcription factor phm6.